Here is a 724-residue protein sequence, read N- to C-terminus: DNA ligase (724 aa).

NAD(+)-binding positions include 44 to 48, 93 to 94, and Glu127; these read DADYD and SL. The active-site N6-AMP-lysine intermediate is the Lys129. Residues Arg150, Glu186, Lys307, and Lys331 each contribute to the NAD(+) site. Residues Cys437, Cys440, Cys461, and Cys467 each coordinate Zn(2+). A BRCT domain is found at 646–724; sequence TEGSPVAGKT…EDEWLALIGG (79 aa).

It belongs to the NAD-dependent DNA ligase family. LigA subfamily. The cofactor is Mg(2+). It depends on Mn(2+) as a cofactor.

It carries out the reaction NAD(+) + (deoxyribonucleotide)n-3'-hydroxyl + 5'-phospho-(deoxyribonucleotide)m = (deoxyribonucleotide)n+m + AMP + beta-nicotinamide D-nucleotide.. DNA ligase that catalyzes the formation of phosphodiester linkages between 5'-phosphoryl and 3'-hydroxyl groups in double-stranded DNA using NAD as a coenzyme and as the energy source for the reaction. It is essential for DNA replication and repair of damaged DNA. The polypeptide is DNA ligase (Agrobacterium fabrum (strain C58 / ATCC 33970) (Agrobacterium tumefaciens (strain C58))).